Reading from the N-terminus, the 461-residue chain is Serine--tRNA ligase (461 aa).

Positions 112 to 134 (EVPFGRDENDNREHHTFGEKPRF) are disordered. Over residues 114–134 (PFGRDENDNREHHTFGEKPRF) the composition is skewed to basic and acidic residues. L-serine is bound at residue 252 to 254 (TAE). 283–285 (RAE) provides a ligand contact to ATP. Glu-306 lines the L-serine pocket. ATP is bound at residue 370 to 373 (EISS). Position 406 (Ser-406) interacts with L-serine.

This sequence belongs to the class-II aminoacyl-tRNA synthetase family. Type-1 seryl-tRNA synthetase subfamily. Homodimer. The tRNA molecule binds across the dimer.

It localises to the cytoplasm. It carries out the reaction tRNA(Ser) + L-serine + ATP = L-seryl-tRNA(Ser) + AMP + diphosphate + H(+). The enzyme catalyses tRNA(Sec) + L-serine + ATP = L-seryl-tRNA(Sec) + AMP + diphosphate + H(+). It functions in the pathway aminoacyl-tRNA biosynthesis; selenocysteinyl-tRNA(Sec) biosynthesis; L-seryl-tRNA(Sec) from L-serine and tRNA(Sec): step 1/1. Catalyzes the attachment of serine to tRNA(Ser). Is also able to aminoacylate tRNA(Sec) with serine, to form the misacylated tRNA L-seryl-tRNA(Sec), which will be further converted into selenocysteinyl-tRNA(Sec). This Methylocella silvestris (strain DSM 15510 / CIP 108128 / LMG 27833 / NCIMB 13906 / BL2) protein is Serine--tRNA ligase.